Here is a 114-residue protein sequence, read N- to C-terminus: Iron-sulfur cluster insertion protein ErpA (114 aa).

The iron-sulfur cluster site is built by C42, C106, and C108.

This sequence belongs to the HesB/IscA family. As to quaternary structure, homodimer. The cofactor is iron-sulfur cluster.

Its function is as follows. Required for insertion of 4Fe-4S clusters for at least IspG. The chain is Iron-sulfur cluster insertion protein ErpA from Yersinia pseudotuberculosis serotype O:1b (strain IP 31758).